A 146-amino-acid polypeptide reads, in one-letter code: Large ribosomal subunit protein uL13 (146 aa).

The disordered stretch occupies residues 126–146 (AGPKHPHAAQQPKVYEPRPRG).

Belongs to the universal ribosomal protein uL13 family. As to quaternary structure, part of the 50S ribosomal subunit.

Functionally, this protein is one of the early assembly proteins of the 50S ribosomal subunit, although it is not seen to bind rRNA by itself. It is important during the early stages of 50S assembly. The polypeptide is Large ribosomal subunit protein uL13 (Roseiflexus castenholzii (strain DSM 13941 / HLO8)).